The following is a 383-amino-acid chain: Probable transcriptional repressor C1348.12 (383 aa).

A DNA-binding region (zn(2)-C6 fungal-type) is located at residues 34-60; sequence CVICRSKKQKCDGQLPCLYCKKYEYQC.

The protein localises to the nucleus. In terms of biological role, probable transcriptional repressor of multidrug resistance genes. The protein is Probable transcriptional repressor C1348.12 of Schizosaccharomyces pombe (strain 972 / ATCC 24843) (Fission yeast).